We begin with the raw amino-acid sequence, 495 residues long: Glycerol kinase (495 aa).

Residue threonine 13 participates in ADP binding. Residues threonine 13, threonine 14, and serine 15 each coordinate ATP. Residue threonine 13 coordinates sn-glycerol 3-phosphate. Arginine 17 provides a ligand contact to ADP. 4 residues coordinate sn-glycerol 3-phosphate: arginine 83, glutamate 84, tyrosine 135, and aspartate 244. Residues arginine 83, glutamate 84, tyrosine 135, aspartate 244, and glutamine 245 each coordinate glycerol. The ADP site is built by threonine 266 and glycine 309. Residues threonine 266, glycine 309, glutamine 313, and glycine 410 each contribute to the ATP site. Residues glycine 410 and asparagine 414 each coordinate ADP.

Belongs to the FGGY kinase family.

The enzyme catalyses glycerol + ATP = sn-glycerol 3-phosphate + ADP + H(+). It functions in the pathway polyol metabolism; glycerol degradation via glycerol kinase pathway; sn-glycerol 3-phosphate from glycerol: step 1/1. With respect to regulation, inhibited by fructose 1,6-bisphosphate (FBP). Its function is as follows. Key enzyme in the regulation of glycerol uptake and metabolism. Catalyzes the phosphorylation of glycerol to yield sn-glycerol 3-phosphate. The sequence is that of Glycerol kinase from Shewanella amazonensis (strain ATCC BAA-1098 / SB2B).